The primary structure comprises 312 residues: DNA-directed RNA polymerase subunit alpha (312 aa).

An alpha N-terminal domain (alpha-NTD) region spans residues 1 to 226 (MIEFEKPNIT…EHFKVFMSTD (226 aa)). The interval 243–312 (NEKKLEMTIE…ELGLSLRQDD (70 aa)) is alpha C-terminal domain (alpha-CTD).

It belongs to the RNA polymerase alpha chain family. As to quaternary structure, homodimer. The RNAP catalytic core consists of 2 alpha, 1 beta, 1 beta' and 1 omega subunit. When a sigma factor is associated with the core the holoenzyme is formed, which can initiate transcription.

The catalysed reaction is RNA(n) + a ribonucleoside 5'-triphosphate = RNA(n+1) + diphosphate. DNA-dependent RNA polymerase catalyzes the transcription of DNA into RNA using the four ribonucleoside triphosphates as substrates. The polypeptide is DNA-directed RNA polymerase subunit alpha (Lactobacillus gasseri (strain ATCC 33323 / DSM 20243 / BCRC 14619 / CIP 102991 / JCM 1131 / KCTC 3163 / NCIMB 11718 / NCTC 13722 / AM63)).